We begin with the raw amino-acid sequence, 381 residues long: ELMO domain-containing protein 3 (381 aa).

Residues 170–324 enclose the ELMO domain; it reads THGRVLQTIY…DLEALAKKSP (155 aa).

In terms of tissue distribution, both isoform 1 and isoform 2 are widely expressed.

It is found in the cell projection. Its subcellular location is the stereocilium. The protein resides in the kinocilium. The protein localises to the cytoplasm. It localises to the cytoskeleton. Its function is as follows. Acts as a GTPase-activating protein (GAP) for ARL2 with low specific activity. The protein is ELMO domain-containing protein 3 (Elmod3) of Mus musculus (Mouse).